We begin with the raw amino-acid sequence, 512 residues long: GMP synthase [glutamine-hydrolyzing] (512 aa).

The Glutamine amidotransferase type-1 domain occupies 7 to 197; that stretch reads TIIVLDFGSQ…VFGVCGCSEG (191 aa). Cys84 acts as the Nucleophile in catalysis. Catalysis depends on residues His171 and Glu173. Positions 198–387 constitute a GMPS ATP-PPase domain; it reads WNMENFIEVE…LGIPDEIVWR (190 aa). 225–231 serves as a coordination point for ATP; that stretch reads SGGVDSS.

As to quaternary structure, homodimer.

The enzyme catalyses XMP + L-glutamine + ATP + H2O = GMP + L-glutamate + AMP + diphosphate + 2 H(+). The protein operates within purine metabolism; GMP biosynthesis; GMP from XMP (L-Gln route): step 1/1. In terms of biological role, catalyzes the synthesis of GMP from XMP. This Bacillus cereus (strain B4264) protein is GMP synthase [glutamine-hydrolyzing].